The sequence spans 219 residues: GTP cyclohydrolase 1 (219 aa).

The interval 1 to 37 is disordered; sequence MDAVLKSLSVRLPDAADKRSDTGRPERVTERPTRQEA. The segment covering 14–37 has biased composition (basic and acidic residues); that stretch reads DAADKRSDTGRPERVTERPTRQEA. Positions 108, 111, and 179 each coordinate Zn(2+).

It belongs to the GTP cyclohydrolase I family. Homomer.

The catalysed reaction is GTP + H2O = 7,8-dihydroneopterin 3'-triphosphate + formate + H(+). Its pathway is cofactor biosynthesis; 7,8-dihydroneopterin triphosphate biosynthesis; 7,8-dihydroneopterin triphosphate from GTP: step 1/1. This is GTP cyclohydrolase 1 from Methylobacterium sp. (strain 4-46).